A 213-amino-acid chain; its full sequence is MKVVVTGFDPFGGEAINPAFEAVKKLPAEIAGAEIIKVEVPTVFGTSGEKVAEAIETHQPDMVICVGQAGGRETVTVEKVAINLAEARIPDNAGQQPSDVPLVEDGATAYFTNLPIKAMVKNCHDHQLPAAISYTAGTFVCNDIMYHLLHLINTKYPTIRGGFIHVPFLPEQTIDKPTFASMSLEAITDSLFYMIEAAVKTQEDIQLQGGTTH.

Residues Glu-78, Cys-141, and His-165 contribute to the active site.

Belongs to the peptidase C15 family. Homotetramer.

It is found in the cytoplasm. The catalysed reaction is Release of an N-terminal pyroglutamyl group from a polypeptide, the second amino acid generally not being Pro.. Its function is as follows. Removes 5-oxoproline from various penultimate amino acid residues except L-proline. This is Pyrrolidone-carboxylate peptidase from Enterococcus faecalis (strain ATCC 700802 / V583).